Consider the following 45-residue polypeptide: Photosystem II reaction center protein K (45 aa).

A propeptide spanning residues 1–8 is cleaved from the precursor; the sequence is MEAALLLA. The helical transmembrane segment at 24–44 threads the bilayer; the sequence is LPIIPLFFLALAFVWQAAVGF.

The protein belongs to the PsbK family. As to quaternary structure, PSII is composed of 1 copy each of membrane proteins PsbA, PsbB, PsbC, PsbD, PsbE, PsbF, PsbH, PsbI, PsbJ, PsbK, PsbL, PsbM, PsbT, PsbX, PsbY, PsbZ, Psb30/Ycf12, peripheral proteins PsbO, CyanoQ (PsbQ), PsbU, PsbV and a large number of cofactors. It forms dimeric complexes.

The protein resides in the cellular thylakoid membrane. Its function is as follows. One of the components of the core complex of photosystem II (PSII). PSII is a light-driven water:plastoquinone oxidoreductase that uses light energy to abstract electrons from H(2)O, generating O(2) and a proton gradient subsequently used for ATP formation. It consists of a core antenna complex that captures photons, and an electron transfer chain that converts photonic excitation into a charge separation. This Rippkaea orientalis (strain PCC 8801 / RF-1) (Cyanothece sp. (strain PCC 8801)) protein is Photosystem II reaction center protein K.